A 351-amino-acid chain; its full sequence is c-di-GMP synthase (351 aa).

The protein belongs to the CD-NTase family. E05 subfamily.

It catalyses the reaction 2 GTP = 3',3'-c-di-GMP + 2 diphosphate. Its function is as follows. Cyclic nucleotide synthase (second messenger synthase) of a CBASS antivirus system. CBASS (cyclic oligonucleotide-based antiphage signaling system) provides immunity against bacteriophage. The CD-NTase protein synthesizes cyclic nucleotides in response to infection; these serve as specific second messenger signals. The signals activate a diverse range of effectors, leading to bacterial cell death and thus abortive phage infection. A type I-D(GG) CBASS system. Cyclic dinucleotide synthase that catalyzes the synthesis of c-di-GMP, has no activity with other NTP substrates. This is c-di-GMP synthase (cdnE) from Capnocytophaga granulosa (strain ATCC 51502 / DSM 11449 / JCM 8566 / LMG 16022 / NCTC 12948 / B0611).